Reading from the N-terminus, the 148-residue chain is Fibroblast growth factor 1 (148 aa).

The propeptide occupies 1–11; the sequence is EITTFAALTER. Asparagine 29 lines the heparin pocket. The segment at 123–139 is heparin-binding; it reads KKNGKTKLGSRTHFGQK.

It belongs to the heparin-binding growth factors family.

It is found in the secreted. Its subcellular location is the cytoplasm. The protein localises to the cell cortex. It localises to the cytosol. The protein resides in the nucleus. Its function is as follows. Plays an important role in the regulation of cell survival, cell division, angiogenesis, cell differentiation and cell migration. Functions as a potent mitogen in vitro. Acts as a ligand for FGFR1 and integrins. Binds to FGFR1 in the presence of heparin leading to FGFR1 dimerization and activation via sequential autophosphorylation on tyrosine residues which act as docking sites for interacting proteins, leading to the activation of several signaling cascades. Binds to integrins. Its binding to integrins and subsequent ternary complex formation with integrins and FGFR1 are essential for FGF1 signaling. This chain is Fibroblast growth factor 1 (fgf1), found in Cynops pyrrhogaster (Japanese fire-bellied newt).